Reading from the N-terminus, the 451-residue chain is Probable phosphoglucosamine mutase (451 aa).

The Phosphoserine intermediate role is filled by serine 96. Mg(2+)-binding residues include serine 96, aspartate 233, aspartate 235, and aspartate 237. The residue at position 96 (serine 96) is a Phosphoserine.

This sequence belongs to the phosphohexose mutase family. The cofactor is Mg(2+). In terms of processing, activated by phosphorylation.

The enzyme catalyses alpha-D-glucosamine 1-phosphate = D-glucosamine 6-phosphate. Catalyzes the conversion of glucosamine-6-phosphate to glucosamine-1-phosphate. The protein is Probable phosphoglucosamine mutase of Pyrococcus horikoshii (strain ATCC 700860 / DSM 12428 / JCM 9974 / NBRC 100139 / OT-3).